The chain runs to 376 residues: tRNA-specific 2-thiouridylase MnmA (376 aa).

Residues 9–16 and M35 each bind ATP; that span reads AMSGGIDS. The active-site Nucleophile is the C105. An intrachain disulfide couples C105 to C202. G129 is an ATP binding site. The interaction with tRNA stretch occupies residues 151-153; the sequence is KDQ. Catalysis depends on C202, which acts as the Cysteine persulfide intermediate. The tract at residues 312-313 is interaction with tRNA; that stretch reads RY.

Belongs to the MnmA/TRMU family.

It localises to the cytoplasm. The catalysed reaction is S-sulfanyl-L-cysteinyl-[protein] + uridine(34) in tRNA + AH2 + ATP = 2-thiouridine(34) in tRNA + L-cysteinyl-[protein] + A + AMP + diphosphate + H(+). Catalyzes the 2-thiolation of uridine at the wobble position (U34) of tRNA, leading to the formation of s(2)U34. The polypeptide is tRNA-specific 2-thiouridylase MnmA (Amoebophilus asiaticus (strain 5a2)).